Reading from the N-terminus, the 393-residue chain is Stearoyl-[acyl-carrier-protein] 9-desaturase, chloroplastic (393 aa).

The transit peptide at 1 to 30 directs the protein to the chloroplast; it reads MALNINGVSLKSHKMLPFPCSSARSERVFM. Fe cation contacts are provided by Glu-135, Glu-173, His-176, Glu-259, and His-262.

It belongs to the fatty acid desaturase type 2 family. Homodimer. Fe(2+) is required as a cofactor.

The protein resides in the plastid. Its subcellular location is the chloroplast. The catalysed reaction is octadecanoyl-[ACP] + 2 reduced [2Fe-2S]-[ferredoxin] + O2 + 2 H(+) = (9Z)-octadecenoyl-[ACP] + 2 oxidized [2Fe-2S]-[ferredoxin] + 2 H2O. It participates in lipid metabolism; fatty acid metabolism. Functionally, converts stearoyl-ACP to oleoyl-ACP by introduction of a cis double bond between carbons 9 and 10 of the acyl chain. The protein is Stearoyl-[acyl-carrier-protein] 9-desaturase, chloroplastic of Solanum tuberosum (Potato).